Consider the following 187-residue polypeptide: ECF RNA polymerase sigma factor SigK (187 aa).

The interval 30–96 (YDHTCTRVYG…RAVDRVRAEQ (67 aa)) is sigma-70 factor domain-2. The Interaction with polymerase core subunit RpoC signature appears at 53–56 (ETTQ). The sigma-70 factor domain-4 stretch occupies residues 133-182 (CLDGLTDTQRQCIELAYYGGLTYAEVSQRLATNLSTIKSRMRDALRGLRN). Residues 155 to 174 (YAEVSQRLATNLSTIKSRMR) constitute a DNA-binding region (H-T-H motif).

Belongs to the sigma-70 factor family. ECF subfamily. As to quaternary structure, interacts transiently with the RNA polymerase catalytic core formed by RpoA, RpoB, RpoC and RpoZ (2 alpha, 1 beta, 1 beta' and 1 omega subunit) to form the RNA polymerase holoenzyme that can initiate transcription. Interacts (via sigma-70 factor domain 4) with anti-sigma-K factor RskA.

Sigma factors are initiation factors that promote the attachment of RNA polymerase to specific initiation sites and are then released. Extracytoplasmic function (ECF) sigma factors are held in an inactive form by an anti-sigma factor until released by regulated intramembrane proteolysis. This chain is ECF RNA polymerase sigma factor SigK (sigK), found in Mycobacterium ulcerans (strain Agy99).